A 398-amino-acid chain; its full sequence is 8-amino-7-oxononanoate synthase (398 aa).

Residues Arg22 and Arg29 each coordinate substrate. 109–110 (GW) provides a ligand contact to pyridoxal 5'-phosphate. His141 provides a ligand contact to substrate. Residues Ser189, 214–217 (DEAH), and 242–245 (TFSK) each bind pyridoxal 5'-phosphate. Lys245 is subject to N6-(pyridoxal phosphate)lysine. Residue Thr359 participates in substrate binding.

Belongs to the class-II pyridoxal-phosphate-dependent aminotransferase family. BioF subfamily. In terms of assembly, homodimer. Pyridoxal 5'-phosphate is required as a cofactor.

The enzyme catalyses 6-carboxyhexanoyl-[ACP] + L-alanine + H(+) = (8S)-8-amino-7-oxononanoate + holo-[ACP] + CO2. It participates in cofactor biosynthesis; biotin biosynthesis. In terms of biological role, catalyzes the decarboxylative condensation of pimeloyl-[acyl-carrier protein] and L-alanine to produce 8-amino-7-oxononanoate (AON), [acyl-carrier protein], and carbon dioxide. The sequence is that of 8-amino-7-oxononanoate synthase from Gluconacetobacter diazotrophicus (strain ATCC 49037 / DSM 5601 / CCUG 37298 / CIP 103539 / LMG 7603 / PAl5).